A 182-amino-acid polypeptide reads, in one-letter code: uncharacterized protein (182 aa).

The next 2 helical transmembrane spans lie at 29–49 (IISG…AGLP) and 63–83 (FYFP…MLTL).

It localises to the cell membrane. This is an uncharacterized protein from Ureaplasma parvum serovar 3 (strain ATCC 700970).